Reading from the N-terminus, the 317-residue chain is METANYYLPSPPYSSTSSSDSRESRMNTPIPTTYSEENVNSLFHLMPDNTDQWMTSQKNFWQEGSPSSSEYLHQQAVQPSQQARLPGISNFMKDSQLSVKPAAYYCSPTMNDYRVEKVANTLLDPYVQLDQPTYADFTNAQVLNHQQEMLQMNFPTPLSTSYMNTAQVTQTHQMPFNIFELNLSNFATFQPACDTPLPLLNSSPTHPYTTMSNFTPPPQDPLVAEPKPMKKRMAAVQCHQNSICSNCKTRETTLWRRNGEGGVECNACNLYFRKNNRKRPLSLRKDGIMKRNRRPRNESPNSAIRNTHQRHGHAAAC.

Positions 1–34 are disordered; it reads METANYYLPSPPYSSTSSSDSRESRMNTPIPTTY. The GATA-type zinc finger occupies 244–268; it reads CSNCKTRETTLWRRNGEGGVECNAC. A disordered region spans residues 290-317; sequence KRNRRPRNESPNSAIRNTHQRHGHAAAC. Residues 307–317 show a composition bias toward basic residues; it reads THQRHGHAAAC.

In terms of assembly, interacts with skn-1; interaction may enhance transcriptional activation of target genes. As to expression, expressed in head, trunk and tail. Expression decreases with age in the hypodermal cells and the pharyngeal-intestinal valve cells in the head, eventually showing little or no expression in about 14 day old worms. Expressed in hypodermal, but not in intestinal, cells at 1 day of age. Expression in the hypodermal and intestinal cells in the trunk region decreases quickly between day 3 and day 5 of adulthood. Expression in the tail between days 3 and 14 stays approximately uniform.

The protein localises to the nucleus. Transcription factor. Required, in concert with signal transducer and transcription factor sta-2, for up-regulation of the vacuolar H(+)-ATPase and acceleration of lysosome maturation at molt. Involved in regulating hypodermal development, perhaps acting downstream of transcription factor elt-1. Modulates environmentally induced changes in collagen gene expression, including rol-6, sqt-1, lon-3, and dpy-13. Involved in regulating expression of various genes, including gst-4, sod-3, ugt-9, and col-144. In response to oxidative stress, required to up-regulate expression of gst-4 mRNA. Regulated by the Insulin/IGF-1-like signaling (IIS) mediated pathway. Plays a role in longevity. May regulate the expression of genes that control sensitivity to osmotic stress, in conjunction with the GATA region-binding transcription factor elt-2. May form a transcriptional circuit with GATA factors egl-18 and elt-6. This is Transcription factor elt-3 from Caenorhabditis elegans.